A 227-amino-acid polypeptide reads, in one-letter code: Cytochrome c oxidase subunit 2 (227 aa).

Residues 1-14 (MAYPLQLGLQDATS) are Mitochondrial intermembrane-facing. Residues 15 to 45 (PIMEELMNFHDHTLMIVFLISSLVLYIISLM) traverse the membrane as a helical segment. Topologically, residues 46-59 (LTTKLTHTSTMDAQ) are mitochondrial matrix. A helical transmembrane segment spans residues 60–87 (EVETIWTILPAVILIMIALPSLRILYMM). Topologically, residues 88 to 227 (DEINNPVLTV…HFENWSASMI (140 aa)) are mitochondrial intermembrane. Cu cation contacts are provided by His-161, Cys-196, Glu-198, Cys-200, His-204, and Met-207. A Mg(2+)-binding site is contributed by Glu-198.

The protein belongs to the cytochrome c oxidase subunit 2 family. Component of the cytochrome c oxidase (complex IV, CIV), a multisubunit enzyme composed of 14 subunits. The complex is composed of a catalytic core of 3 subunits MT-CO1, MT-CO2 and MT-CO3, encoded in the mitochondrial DNA, and 11 supernumerary subunits COX4I, COX5A, COX5B, COX6A, COX6B, COX6C, COX7A, COX7B, COX7C, COX8 and NDUFA4, which are encoded in the nuclear genome. The complex exists as a monomer or a dimer and forms supercomplexes (SCs) in the inner mitochondrial membrane with NADH-ubiquinone oxidoreductase (complex I, CI) and ubiquinol-cytochrome c oxidoreductase (cytochrome b-c1 complex, complex III, CIII), resulting in different assemblies (supercomplex SCI(1)III(2)IV(1) and megacomplex MCI(2)III(2)IV(2)). Found in a complex with TMEM177, COA6, COX18, COX20, SCO1 and SCO2. Interacts with TMEM177 in a COX20-dependent manner. Interacts with COX20. Interacts with COX16. The cofactor is Cu cation.

The protein resides in the mitochondrion inner membrane. It carries out the reaction 4 Fe(II)-[cytochrome c] + O2 + 8 H(+)(in) = 4 Fe(III)-[cytochrome c] + 2 H2O + 4 H(+)(out). Component of the cytochrome c oxidase, the last enzyme in the mitochondrial electron transport chain which drives oxidative phosphorylation. The respiratory chain contains 3 multisubunit complexes succinate dehydrogenase (complex II, CII), ubiquinol-cytochrome c oxidoreductase (cytochrome b-c1 complex, complex III, CIII) and cytochrome c oxidase (complex IV, CIV), that cooperate to transfer electrons derived from NADH and succinate to molecular oxygen, creating an electrochemical gradient over the inner membrane that drives transmembrane transport and the ATP synthase. Cytochrome c oxidase is the component of the respiratory chain that catalyzes the reduction of oxygen to water. Electrons originating from reduced cytochrome c in the intermembrane space (IMS) are transferred via the dinuclear copper A center (CU(A)) of subunit 2 and heme A of subunit 1 to the active site in subunit 1, a binuclear center (BNC) formed by heme A3 and copper B (CU(B)). The BNC reduces molecular oxygen to 2 water molecules using 4 electrons from cytochrome c in the IMS and 4 protons from the mitochondrial matrix. In Zelotomys hildegardeae (Hildegarde's broad-headed mouse), this protein is Cytochrome c oxidase subunit 2 (MT-CO2).